Consider the following 375-residue polypeptide: MQLQFRSWMLAALTLLVVFLIFADISEIEEEIGNSGGRGTIRSAVNSLHSKSNRAEVVINGSSSPAVVDRSNESIKHNIQPASSKWRHNQTLSLRIRKQILKFLDAEKDISVLKGTLKPGDIIHYIFDRDSTMNVSQNLYELLPRTSPLKNKHFGTCAIVGNSGVLLNSGCGQEIDAHSFVIRCNLAPVQEYARDVGLKTDLVTMNPSVIQRAFEDLVNATWREKLLQRLHSLNGSILWIPAFMARGGKERVEWVNELILKHHVNVRTAYPSLRLLHAVRGYWLTNKVHIKRPTTGLLMYTLATRFCKQIYLYGFWPFPLDQNQNPVKYHYYDSLKYGYTSQASPHTMPLEFKALKSLHEQGALKLTVGQCDGAT.

The Cytoplasmic segment spans residues 1–6 (MQLQFR). Residues 7–23 (SWMLAALTLLVVFLIFA) traverse the membrane as a helical; Signal-anchor for type II membrane protein segment. Residues 24–375 (DISEIEEEIG…LTVGQCDGAT (352 aa)) lie on the Lumenal side of the membrane. N-linked (GlcNAc...) asparagine glycans are attached at residues Asn60, Asn72, Asn89, and Asn134. Intrachain disulfides connect Cys157-Cys307 and Cys171-Cys371. Residues Asn162 and Asn185 each coordinate CMP-N-acetyl-beta-neuraminate. Asn219 and Asn234 each carry an N-linked (GlcNAc...) asparagine glycan. CMP-N-acetyl-beta-neuraminate is bound by residues Thr294, Thr295, Gly296, Trp316, Tyr329, and His330. The active-site Proton donor/acceptor is His346.

This sequence belongs to the glycosyltransferase 29 family. Autopolysialylated. Autopolysialylation is not a prerequisite for the polysialylation acitity, but enhances the polysialylation acitity. In terms of tissue distribution, highly expressed in fetal brain, kidney and heart and to a much lesser extent in adult heart and thymus.

The protein resides in the golgi apparatus membrane. The protein localises to the secreted. It localises to the cell membrane. It carries out the reaction [N-acetyl-alpha-D-neuraminosyl-(2-&gt;8)](n) + CMP-N-acetyl-beta-neuraminate = [N-acetyl-alpha-D-neuraminosyl-(2-&gt;8)](n+1) + CMP + H(+). The protein operates within protein modification; protein glycosylation. In terms of biological role, catalyzes the transfer of a sialic acid from a CMP-linked sialic acid donor onto a terminal alpha-2,3-, alpha-2,6-, or alpha-2,8-linked sialic acid of an N-linked glycan acceptor through alpha-2,8-linkages. Therefore, participates in polysialic acid synthesis on various sialylated N-acetyllactosaminyl oligosaccharides (alpha-2,3-, alpha-2,6-, or alpha-2,8-linked sialic acid), including NCAM1, NCAM1 N-glycans, FETUB N-glycans, and to a lesser extent sialylparagloboside (SPG) and AHSG, which does not require the initial addition of an alpha 2,8-sialic acid. However, does not exhibit sialic acid-polymerase activity. Catalyzes polysialic acid synthesis in the hippocampal on NCAM1 and supports neurite outgrowth. ST8SIA2-mediated polysialylation influences on oligodendrocyte differentiation and may promote the integrity of myelin and axons. This Homo sapiens (Human) protein is Alpha-2,8-sialyltransferase 8B.